Reading from the N-terminus, the 427-residue chain is Putative B3 domain-containing protein Os04g0346900 (427 aa).

2 DNA-binding regions (TF-B3) span residues 25–118 (LVPS…FDTT) and 140–236 (KPQF…FGPN). The disordered stretch occupies residues 253–309 (TGEQQEAPSFSRRKCNNKKKSRFGEDDGNQQEMPCSRKGSGNKGRTSDRETKRMRKT). Positions 263–273 (SRRKCNNKKKS) are enriched in basic residues. The TF-B3 3 DNA-binding region spans 320–427 (WIKKEINEYV…TLWRVDIERC (108 aa)).

The protein resides in the nucleus. This chain is Putative B3 domain-containing protein Os04g0346900, found in Oryza sativa subsp. japonica (Rice).